We begin with the raw amino-acid sequence, 467 residues long: Mothers against decapentaplegic homolog 2 (467 aa).

S2 bears the N-acetylserine mark. At T8 the chain carries Phosphothreonine. Residues 10-176 (PVVKRLLGWK…YQRVETPVLP (167 aa)) enclose the MH1 domain. Position 19 is an N6-acetyllysine (K19). Residues C74, C149, C161, and H166 each contribute to the Zn(2+) site. Over residues 207 to 217 (PAGIEPQSNYI) the composition is skewed to polar residues. The disordered stretch occupies residues 207 to 251 (PAGIEPQSNYIPETPPPGYISEDGETSDQQLNQSMDTGSPAELSP). Phosphothreonine is present on T220. Positions 221 to 225 (PPPGY) match the PY-motif motif. Polar residues predominate over residues 233–243 (SDQQLNQSMDT). S240 bears the Phosphoserine; by CAMK2 mark. Phosphoserine is present on residues S245, S250, S255, S458, S460, and S464. The MH2 domain maps to 274–467 (WCSIAYYELN…SPSVRCSSMS (194 aa)). A phosphoserine; by TGFBR1 mark is found at S465 and S467.

Belongs to the dwarfin/SMAD family. In terms of assembly, monomer; in the absence of TGF-beta. Heterodimer; in the presence of TGF-beta. Forms a heterodimer with co-SMAD, SMAD4, in the nucleus to form the transactivation complex SMAD2/SMAD4. Found in a complex with SMAD3 and TRIM33 upon addition of TGF-beta. Identified in a complex that contains at least ZNF451, SMAD2, SMAD3 and SMAD4. Interacts (via the MH2 domain) with ZFYVE9; may form trimers with the SMAD4 co-SMAD. Interacts with TAZ/WWRT1. Interacts with FOXH1. Interacts with SNW1. Interacts with CREB-binding protein (CBP) and EP300. Interacts with SNON. Interacts with ALK4/ACVR1B. Interacts with SKOR1. Interacts with SKOR2. Interacts with PRDM16. Interacts (via MH2 domain) with LEMD3. Interacts with RBPMS. Interacts with WWP1. Interacts (dephosphorylated form, via the MH1 and MH2 domains) with RANBP3 (via its C-terminal R domain); the interaction results in the export of dephosphorylated SMAD3 out of the nucleus and termination of the TGF-beta signaling. Interacts with PDPK1 (via PH domain). Interacts with DAB2; the interactions are enhanced upon TGF-beta stimulation. Interacts with USP15. Interacts with PPP5C. Interacts with LDLRAD4 (via the SMAD interaction motif). Interacts (via MH2 domain) with PMEPA1 (via the SMAD interaction motif). Interacts with ZFHX3. Interacts with ZNF451. Interacts with SMURF2 when phosphorylated on Ser-465/467. Interacts with PPM1A. Interacts with TGF-beta. Interacts with TGFBR1. Interacts with TGIF. Interacts with SMAD3 and TRIM33. Interacts with ZNF580. Interacts with NEDD4L in response to TGF-beta. Interacts with HGS. Interacts with AIP1. Interacts with WWP1. Interacts with PML. Interacts weakly with ZNF8. Interacts (when phosphorylated) with RNF111; RNF111 acts as an enhancer of the transcriptional responses by mediating ubiquitination and degradation of SMAD2 inhibitors. Interacts with YAP1 (when phosphorylated at 'Ser-55'). Interacts when phosphorylated with IPO7; the interaction facilitates translocation of SMAD2 to the nucleus. Interacts with MTMR4; negatively regulates TGF-beta signaling through SMAD2 dephosphorylation and retention in endosomes. In response to TGF-beta, phosphorylated on the C-terminal SXS motif by TGF-beta and activin type 1 receptor kinases, phosphorylation declines progressively in a KMT5A-dependent manner. Phosphorylation in this motif is required for interaction with a number of proteins including SMURF2, SNON and SMAD4 in response to TGF-beta. Dephosphorylated in this motif by PPM1A leading to disruption of the SMAD2/3-SMAD4 complex, nuclear export and termination of the TGF-beta signaling. In response to decorin, the naturally occurring inhibitor of TGF-beta signaling, phosphorylated on Ser-240 by CaMK2. Phosphorylated by MAPK3 upon EGF stimulation; which increases transcriptional activity and stability, and is blocked by calmodulin. Phosphorylated by PDPK1. In terms of processing, acetylated on Lys-19 by coactivators in response to TGF-beta signaling, which increases transcriptional activity. Post-translationally, in response to TGF-beta, ubiquitinated by NEDD4L; which promotes its degradation. Monoubiquitinated, leading to prevent DNA-binding. Deubiquitination by USP15 alleviates inhibition and promotes activation of TGF-beta target genes. Ubiquitinated by RNF111, leading to its degradation: only SMAD2 proteins that are 'in use' are targeted by RNF111, RNF111 playing a key role in activating SMAD2 and regulating its turnover.

It localises to the cytoplasm. The protein resides in the nucleus. Receptor-regulated SMAD (R-SMAD) that is an intracellular signal transducer and transcriptional modulator activated by TGF-beta (transforming growth factor) and activin type 1 receptor kinases. Binds the TRE element in the promoter region of many genes that are regulated by TGF-beta and, on formation of the SMAD2/SMAD4 complex, activates transcription. Promotes TGFB1-mediated transcription of odontoblastic differentiation genes in dental papilla cells. Positively regulates PDPK1 kinase activity by stimulating its dissociation from the 14-3-3 protein YWHAQ which acts as a negative regulator. The protein is Mothers against decapentaplegic homolog 2 (SMAD2) of Pongo abelii (Sumatran orangutan).